Reading from the N-terminus, the 271-residue chain is 2-dehydro-3-deoxyphosphooctonate aldolase (271 aa).

This sequence belongs to the KdsA family.

Its subcellular location is the cytoplasm. It catalyses the reaction D-arabinose 5-phosphate + phosphoenolpyruvate + H2O = 3-deoxy-alpha-D-manno-2-octulosonate-8-phosphate + phosphate. Its pathway is carbohydrate biosynthesis; 3-deoxy-D-manno-octulosonate biosynthesis; 3-deoxy-D-manno-octulosonate from D-ribulose 5-phosphate: step 2/3. It participates in bacterial outer membrane biogenesis; lipopolysaccharide biosynthesis. This Campylobacter jejuni subsp. jejuni serotype O:23/36 (strain 81-176) protein is 2-dehydro-3-deoxyphosphooctonate aldolase.